Here is a 355-residue protein sequence, read N- to C-terminus: Methyltransferase FUS9 (355 aa).

Y18, N63, D86, S123, and F124 together coordinate S-adenosyl-L-homocysteine. Position 231 (F231) interacts with Mg(2+).

It belongs to the methyltransferase superfamily. Type-7 methyltransferase family. It depends on Mg(2+) as a cofactor.

Its pathway is mycotoxin biosynthesis. Its function is as follows. Methyltransferase; part of the gene cluster that mediates the biosynthesis of the mycotoxin fusarin C. Within the cluster, FUS1, FUS2, FUS8 and FUS9 are sufficient for fusarin production. The roles of the other FUS members are yet undetermined. The fusarin C synthetase FUS1 is responsible for the condensation of one acetyl-coenzyme A (CoA) unit with six malonyl-CoA units and the amide linkage of the arising heptaketide and homoserine, subsequently releasing the first intermediate, prefusarin, as an alcohol with an open ring structure. The cytochrome P450 monooxygenase FUS8 participates in multiple oxidation processes at carbon C-20 and is able to use the FUS1 product as substrate, resulting in formation of 20-hydroxy-prefusarin. This reaction seems to be essential before the 2-pyrrolidone ring closure can be catalyzed by FUS2, generating 20-hydroxy-fusarin. FUS8 is able to further oxidizes carbon C-20 after ring closure, resulting in the formation of carboxy-fusarin C. As the last step, FUS9 methylates the hydroxyl group at C-21 to generate fusarin C. Fusarin C can then rearrange to epi-fusarin C, the (z)-isomers, and fusarin A and fusarin D. The protein is Methyltransferase FUS9 of Gibberella moniliformis (strain M3125 / FGSC 7600) (Maize ear and stalk rot fungus).